A 321-amino-acid chain; its full sequence is Probable E3 ubiquitin-protein ligase BAH1-like 1 (321 aa).

In terms of domain architecture, SPX spans 1-149 (MKFAKKYEKY…YSKQGQEFKA (149 aa)). Residues 217–266 (CSICLDTVFDPVALSCGHIYCYLCSCSAASVTIVDGLKSAERKSKCPLCR) form an RING-type zinc finger.

It belongs to the RING-type zinc finger family.

It catalyses the reaction S-ubiquitinyl-[E2 ubiquitin-conjugating enzyme]-L-cysteine + [acceptor protein]-L-lysine = [E2 ubiquitin-conjugating enzyme]-L-cysteine + N(6)-ubiquitinyl-[acceptor protein]-L-lysine.. The protein operates within protein modification; protein ubiquitination. The protein is Probable E3 ubiquitin-protein ligase BAH1-like 1 of Oryza sativa subsp. indica (Rice).